A 142-amino-acid chain; its full sequence is Tol-Pal system protein TolR (142 aa).

Residues Met1–Asn17 are Cytoplasmic-facing. Residues Ile18–Ile38 form a helical membrane-spanning segment. At Ile39–Ile142 the chain is on the periplasmic side.

Belongs to the ExbD/TolR family. As to quaternary structure, the Tol-Pal system is composed of five core proteins: the inner membrane proteins TolA, TolQ and TolR, the periplasmic protein TolB and the outer membrane protein Pal. They form a network linking the inner and outer membranes and the peptidoglycan layer.

The protein resides in the cell inner membrane. Functionally, part of the Tol-Pal system, which plays a role in outer membrane invagination during cell division and is important for maintaining outer membrane integrity. Required, with TolQ, for the proton motive force-dependent activation of TolA and for TolA-Pal interaction. This is Tol-Pal system protein TolR from Escherichia coli O157:H7.